Here is an 808-residue protein sequence, read N- to C-terminus: MSKLSFRARALDAAKPLPIYRGKDMPDLNDCVSINRAVPQMPTGMEKEEESEHHLQRAISAQQVFREKKESMVIPVPEAESNVNYYNRLYKGEFKQPKQFIHIQPFNLDNEQPDYDMDSEDETLLNRLNRKMEIKPLQFEIMIDRLEKASSNQLVTLQEAKLLLNEDDYLIKAVYDYWVRKRKNCRGPSLIPQIKQEKRDGSTNNDPYVAFRRRTEKMQTRKNRKNDEASYEKMLKLRREFSRAITILEMIKRREKTKRELLHLTLEVVEKRYHLGDYGGEILNEVKVNRSEKELYASPATLHNGNHHKVQECKTKHPHHLSLKEEASDVVRQKKKYPKKPKAEAGIAPQQPTPETLPVINKSDIKQYDFQSSDEDEFPQVLSPASEAEEENDPDGSCAFRRRAGCQYYAPRLDQANNHMCENSELADLDKLRYKHCLTTLTVPRRCIGFARRRIGRGGRVIMDRISTEHDPVLKQIDPEMLNGFSSSSQTIDFSSNFSRTNASSKPCENRLSLSEILSNIRSCRLQCFQPRLLNVQDIDSEECTSRKPGQTVSSKRVSAASVALLNTSKNGISVTGGITEEQFQTHQQQLVQMQRQQLAQLHQKQQSQHSSQQTHPKAQGSSTSDCMSKTLDSASAHFAASAVVSAPVPSRSEGSKEQNTGHNNMNGVVQPSGPSKTLYSTNMALSSSPGISAVQLVRTVGHTTTNHLIPALCTSSPQTLPMNNSCLTNAVHLNNVSVVSPVNVHINTRTSAPSPTALKLATVAASMDRVPKVTPSSAISSIARENHEPERLGLNGLAETTVAMEVT.

Glycyl lysine isopeptide (Lys-Gly) (interchain with G-Cter in SUMO2) cross-links involve residues K135, K195, and K324. Residues 337–357 form a disordered region; it reads YPKKPKAEAGIAPQQPTPETL. K362 is covalently cross-linked (Glycyl lysine isopeptide (Lys-Gly) (interchain with G-Cter in SUMO2)). 3 disordered regions span residues 371-397, 595-630, and 645-682; these read QSSD…PDGS, QRQQ…CMSK, and VSAP…LYST. The segment covering 595-614 has biased composition (low complexity); it reads QRQQLAQLHQKQQSQHSSQQ. Polar residues-rich tracts occupy residues 615 to 630 and 658 to 682; these read THPK…CMSK and EQNT…LYST. S755 is modified (phosphoserine).

It belongs to the enhancer of polycomb family.

It is found in the nucleus. In terms of biological role, may play a role in transcription or DNA repair. The sequence is that of Enhancer of polycomb homolog 2 (Epc2) from Mus musculus (Mouse).